Here is a 415-residue protein sequence, read N- to C-terminus: Histidine--tRNA ligase (415 aa).

Belongs to the class-II aminoacyl-tRNA synthetase family. As to quaternary structure, homodimer.

The protein resides in the cytoplasm. The enzyme catalyses tRNA(His) + L-histidine + ATP = L-histidyl-tRNA(His) + AMP + diphosphate + H(+). The protein is Histidine--tRNA ligase of Clostridium botulinum (strain 657 / Type Ba4).